The chain runs to 306 residues: Pyridoxal 5'-phosphate synthase subunit SNZERR (306 aa).

A D-ribose 5-phosphate-binding site is contributed by Asp-34. Lys-91 acts as the Schiff-base intermediate with D-ribose 5-phosphate in catalysis. Gly-163 is a binding site for D-ribose 5-phosphate. Arg-175 provides a ligand contact to D-glyceraldehyde 3-phosphate. Residues Gly-224 and 245–246 (GS) contribute to the D-ribose 5-phosphate site.

Belongs to the PdxS/SNZ family.

The enzyme catalyses aldehydo-D-ribose 5-phosphate + D-glyceraldehyde 3-phosphate + L-glutamine = pyridoxal 5'-phosphate + L-glutamate + phosphate + 3 H2O + H(+). It functions in the pathway cofactor biosynthesis; pyridoxal 5'-phosphate biosynthesis. In terms of biological role, catalyzes the formation of pyridoxal 5'-phosphate from ribose 5-phosphate (RBP), glyceraldehyde 3-phosphate (G3P) and ammonia. The ammonia is provided by PDX2. Can also use ribulose 5-phosphate and dihydroxyacetone phosphate as substrates, resulting from enzyme-catalyzed isomerization of RBP and G3P, respectively. Also plays an indirect role in resistance to singlet oxygen-generating photosensitizers. This chain is Pyridoxal 5'-phosphate synthase subunit SNZERR (SNZERR), found in Suberites domuncula (Sponge).